The primary structure comprises 454 residues: MLNIMEVHETNQMIEQEKLDVRTITMGISLLDCASDDVDKTCDNIYRKITTYAKDLVSTGKAIERDYGIPIVNKRITVTPISLVGASSCKTSEDFVKIAHALDKAAKEVGVDLIGGYSALVSKSMTPAEELLIRSLPQALSETDIVCSSVNVGSTKTGIDMNAVELLGHIIKDVAERTADNDSYGCVKFVAFCNVPDDNPFMAGGFHGVTEGDAVINVGVSGPGVVSRALDAAKGKDFEFLCETIKRTAFKITRVGQLVAQEASRRLGIPFGIIDLSLAPTPAVGDSVGEVLEKIGLEQVGAPGTTAALAMLNDQVKKGGIMASSYVGGLSGAFIPVSEDKNMIDAASSGCLTLEKLEAMTCVCSVGLDMIAIPGDTSASTISGLIADEAAIGMVNQKTTAVRVIPVEGKGVGEMANFGGLMGYAPIIPVNQTSCEAFVTRGGRIPAPIHSFKN.

The protein belongs to the UPF0210 family. In terms of assembly, homodimer.

The chain is UPF0210 protein Blon_2054/BLIJ_2131 from Bifidobacterium longum subsp. infantis (strain ATCC 15697 / DSM 20088 / JCM 1222 / NCTC 11817 / S12).